We begin with the raw amino-acid sequence, 140 residues long: L-fucose mutarotase (140 aa).

The active-site Proton donor is histidine 22. Residues aspartate 30, arginine 107, and 129–131 contribute to the substrate site; that span reads YGN.

Belongs to the RbsD / FucU family. FucU mutarotase subfamily. In terms of assembly, homodecamer.

The protein localises to the cytoplasm. The enzyme catalyses alpha-L-fucose = beta-L-fucose. Its pathway is carbohydrate metabolism; L-fucose metabolism. Its function is as follows. Involved in the anomeric conversion of L-fucose. The polypeptide is L-fucose mutarotase (Salmonella typhimurium (strain LT2 / SGSC1412 / ATCC 700720)).